A 400-amino-acid polypeptide reads, in one-letter code: Lysophospholipid transporter LplT (400 aa).

12 helical membrane passes run 19–39, 53–73, 91–111, 139–159, 164–184, 195–213, 227–247, 257–277, 281–301, 304–324, 352–372, and 373–393; these read VIVA…ATLA, VLQM…GQMA, AGAA…LVGI, LMEA…GVLA, IAAL…NLFI, SWRL…VVLW, LFWG…PVAL, YLNA…AKLV, TVSR…IFSL, ALLP…FFVV, NSAM…GVPA, and VAIG…LWIW.

Belongs to the major facilitator superfamily. LplT (TC 2.A.1.42) family.

Its subcellular location is the cell inner membrane. In terms of biological role, catalyzes the facilitated diffusion of 2-acyl-glycero-3-phosphoethanolamine (2-acyl-GPE) into the cell. This is Lysophospholipid transporter LplT from Salmonella enteritidis PT4 (strain P125109).